Here is a 425-residue protein sequence, read N- to C-terminus: Protein CLP1 homolog (425 aa).

Residues Glu-18, Lys-59, and 121–126 (DVGKST) contribute to the ATP site.

Belongs to the Clp1 family. Clp1 subfamily.

Its subcellular location is the nucleus. Functionally, required for endonucleolytic cleavage during polyadenylation-dependent pre-mRNA 3'-end formation. The sequence is that of Protein CLP1 homolog (cbc) from Drosophila grimshawi (Hawaiian fruit fly).